The following is a 151-amino-acid chain: Copper transporter 3 (151 aa).

Helical transmembrane passes span 52–72 (LKMY…SECL) and 103–123 (YLVM…AMAG).

It belongs to the copper transporter (Ctr) (TC 1.A.56) family. SLC31A subfamily. Highly expressed in stems and at lower levels in leaves and flowers.

It is found in the membrane. Its function is as follows. Involved in the transport of copper. The polypeptide is Copper transporter 3 (COPT3) (Arabidopsis thaliana (Mouse-ear cress)).